A 751-amino-acid chain; its full sequence is Ribosomal RNA large subunit methyltransferase K/L (751 aa).

The THUMP domain maps to 44 to 155 (LAYRTCLWSR…KNKLVLSIDL (112 aa)).

It belongs to the methyltransferase superfamily. RlmKL family.

It localises to the cytoplasm. The enzyme catalyses guanosine(2445) in 23S rRNA + S-adenosyl-L-methionine = N(2)-methylguanosine(2445) in 23S rRNA + S-adenosyl-L-homocysteine + H(+). The catalysed reaction is guanosine(2069) in 23S rRNA + S-adenosyl-L-methionine = N(2)-methylguanosine(2069) in 23S rRNA + S-adenosyl-L-homocysteine + H(+). Specifically methylates the guanine in position 2445 (m2G2445) and the guanine in position 2069 (m7G2069) of 23S rRNA. This is Ribosomal RNA large subunit methyltransferase K/L from Cellvibrio japonicus (strain Ueda107) (Pseudomonas fluorescens subsp. cellulosa).